Consider the following 442-residue polypeptide: Putative neutral sphingomyelinase (442 aa).

Glu-46 provides a ligand contact to Mg(2+). The active-site Proton acceptor is His-264. Residues Ala-309–Ser-330 are disordered. Positions Ser-318–Ser-330 are enriched in polar residues. Transmembrane regions (helical) follow at residues Arg-362–Ala-384 and Ile-391–Trp-413.

It belongs to the neutral sphingomyelinase family.

Its subcellular location is the membrane. It carries out the reaction a sphingomyelin + H2O = phosphocholine + an N-acylsphing-4-enine + H(+). It participates in lipid metabolism; sphingolipid metabolism. This is Putative neutral sphingomyelinase from Drosophila melanogaster (Fruit fly).